The sequence spans 647 residues: Acetyl-coenzyme A synthetase (647 aa).

CoA is bound by residues 190–193 (RGGR), threonine 308, and asparagine 332. Residues 384–386 (GEP), 408–413 (DTWWQT), aspartate 497, and arginine 512 each bind ATP. Serine 520 contributes to the CoA binding site. Arginine 523 is an ATP binding site. Valine 534, histidine 536, and valine 539 together coordinate Mg(2+). Residue arginine 581 coordinates CoA. Lysine 606 carries the post-translational modification N6-acetyllysine.

Belongs to the ATP-dependent AMP-binding enzyme family. Mg(2+) is required as a cofactor. In terms of processing, acetylated. Deacetylation by the SIR2-homolog deacetylase activates the enzyme.

The catalysed reaction is acetate + ATP + CoA = acetyl-CoA + AMP + diphosphate. Its function is as follows. Catalyzes the conversion of acetate into acetyl-CoA (AcCoA), an essential intermediate at the junction of anabolic and catabolic pathways. AcsA undergoes a two-step reaction. In the first half reaction, AcsA combines acetate with ATP to form acetyl-adenylate (AcAMP) intermediate. In the second half reaction, it can then transfer the acetyl group from AcAMP to the sulfhydryl group of CoA, forming the product AcCoA. The chain is Acetyl-coenzyme A synthetase from Parvibaculum lavamentivorans (strain DS-1 / DSM 13023 / NCIMB 13966).